The primary structure comprises 248 residues: Eukaryotic translation initiation factor 6 (248 aa).

This sequence belongs to the eIF-6 family. In terms of assembly, monomer. Associates with the 60S ribosomal subunit.

The protein resides in the cytoplasm. It is found in the nucleus. The protein localises to the nucleolus. Binds to the 60S ribosomal subunit and prevents its association with the 40S ribosomal subunit to form the 80S initiation complex in the cytoplasm. May also be involved in ribosome biogenesis. In Trypanosoma cruzi (strain CL Brener), this protein is Eukaryotic translation initiation factor 6.